The following is an 88-amino-acid chain: Small ribosomal subunit protein bS20 (88 aa).

The tract at residues 1-21 (MANTTSAKKATRKIARRTAVN) is disordered.

It belongs to the bacterial ribosomal protein bS20 family.

Its function is as follows. Binds directly to 16S ribosomal RNA. The sequence is that of Small ribosomal subunit protein bS20 from Agrobacterium fabrum (strain C58 / ATCC 33970) (Agrobacterium tumefaciens (strain C58)).